The primary structure comprises 110 residues: Phosphoribosyl-AMP cyclohydrolase (110 aa).

Asp-80 contributes to the Mg(2+) binding site. A Zn(2+)-binding site is contributed by Cys-81. The Mg(2+) site is built by Asp-82 and Asp-84. Positions 97 and 104 each coordinate Zn(2+).

Belongs to the PRA-CH family. Homodimer. Mg(2+) is required as a cofactor. Zn(2+) serves as cofactor.

Its subcellular location is the cytoplasm. It catalyses the reaction 1-(5-phospho-beta-D-ribosyl)-5'-AMP + H2O = 1-(5-phospho-beta-D-ribosyl)-5-[(5-phospho-beta-D-ribosylamino)methylideneamino]imidazole-4-carboxamide. It participates in amino-acid biosynthesis; L-histidine biosynthesis; L-histidine from 5-phospho-alpha-D-ribose 1-diphosphate: step 3/9. Its function is as follows. Catalyzes the hydrolysis of the adenine ring of phosphoribosyl-AMP. This chain is Phosphoribosyl-AMP cyclohydrolase, found in Clostridium botulinum (strain 657 / Type Ba4).